The following is an 864-amino-acid chain: Leucine--tRNA ligase (864 aa).

A 'HIGH' region motif is present at residues 42–52 (PYPSGKLHMGH). The 'KMSKS' region signature appears at 624–628 (KMSKS). Lysine 627 contributes to the ATP binding site.

The protein belongs to the class-I aminoacyl-tRNA synthetase family.

It is found in the cytoplasm. The enzyme catalyses tRNA(Leu) + L-leucine + ATP = L-leucyl-tRNA(Leu) + AMP + diphosphate. The protein is Leucine--tRNA ligase of Burkholderia mallei (strain NCTC 10229).